Reading from the N-terminus, the 481-residue chain is UDP-N-acetylmuramoyl-L-alanyl-D-glutamate--L-lysine ligase (481 aa).

Residue S42 coordinates UDP-N-acetyl-alpha-D-muramoyl-L-alanyl-D-glutamate. 118 to 124 (GTKGKTT) is a binding site for ATP. UDP-N-acetyl-alpha-D-muramoyl-L-alanyl-D-glutamate is bound by residues Q158, 160–161 (TT), S187, and R195. K229 bears the N6-carboxylysine mark. Residues 404-407 (DDPN) carry the L-lysine recognition motif motif.

The protein belongs to the MurCDEF family. MurE subfamily. Carboxylation is probably crucial for Mg(2+) binding and, consequently, for the gamma-phosphate positioning of ATP.

It is found in the cytoplasm. It catalyses the reaction UDP-N-acetyl-alpha-D-muramoyl-L-alanyl-D-glutamate + L-lysine + ATP = UDP-N-acetyl-alpha-D-muramoyl-L-alanyl-gamma-D-glutamyl-L-lysine + ADP + phosphate + H(+). It participates in cell wall biogenesis; peptidoglycan biosynthesis. Its function is as follows. Catalyzes the addition of L-lysine to the nucleotide precursor UDP-N-acetylmuramoyl-L-alanyl-D-glutamate (UMAG) in the biosynthesis of bacterial cell-wall peptidoglycan. The polypeptide is UDP-N-acetylmuramoyl-L-alanyl-D-glutamate--L-lysine ligase (Streptococcus pyogenes serotype M4 (strain MGAS10750)).